The following is a 330-amino-acid chain: Putative 1-aminocyclopropane-1-carboxylate deaminase (330 aa).

K54 carries the post-translational modification N6-(pyridoxal phosphate)lysine.

Belongs to the ACC deaminase/D-cysteine desulfhydrase family. Requires pyridoxal 5'-phosphate as cofactor.

The enzyme catalyses 1-aminocyclopropane-1-carboxylate + H2O = 2-oxobutanoate + NH4(+). The chain is Putative 1-aminocyclopropane-1-carboxylate deaminase from Pyrococcus abyssi (strain GE5 / Orsay).